We begin with the raw amino-acid sequence, 882 residues long: Alanine--tRNA ligase (882 aa).

Zn(2+) contacts are provided by H570, H574, C672, and H676.

Belongs to the class-II aminoacyl-tRNA synthetase family. Zn(2+) is required as a cofactor.

The protein resides in the cytoplasm. It carries out the reaction tRNA(Ala) + L-alanine + ATP = L-alanyl-tRNA(Ala) + AMP + diphosphate. Its function is as follows. Catalyzes the attachment of alanine to tRNA(Ala) in a two-step reaction: alanine is first activated by ATP to form Ala-AMP and then transferred to the acceptor end of tRNA(Ala). Also edits incorrectly charged Ser-tRNA(Ala) and Gly-tRNA(Ala) via its editing domain. This Xanthomonas campestris pv. campestris (strain B100) protein is Alanine--tRNA ligase.